A 134-amino-acid polypeptide reads, in one-letter code: Small ribosomal subunit protein uS8c (134 aa).

It belongs to the universal ribosomal protein uS8 family. In terms of assembly, part of the 30S ribosomal subunit.

Its subcellular location is the plastid. Functionally, one of the primary rRNA binding proteins, it binds directly to 16S rRNA central domain where it helps coordinate assembly of the platform of the 30S subunit. This Cuscuta obtusiflora (Peruvian dodder) protein is Small ribosomal subunit protein uS8c (rps8).